We begin with the raw amino-acid sequence, 1175 residues long: Double-stranded RNA-specific adenosine deaminase (1175 aa).

Arg30 and Arg42 each carry asymmetric dimethylarginine. Positions 135 to 201 (LSISQNPEQK…GKPPLWSLVP (67 aa)) constitute a Z-binding 1 domain. Residues 135–204 (LSISQNPEQK…PLWSLVPLSQ (70 aa)) form an interaction with Z-DNA region. The disordered stretch occupies residues 207–239 (TQPPRAVNSDKEVPRGEPDLDSEDGDPASDLEG). A compositionally biased stretch (basic and acidic residues) spans 214–224 (NSDKEVPRGEP). The span at 225 to 235 (DLDSEDGDPAS) shows a compositional bias: acidic residues. A phosphoserine mark is found at Ser228 and Ser235. The Z-binding 2 domain occupies 243-307 (LLDMAEIKEK…ATPPIWYLTD (65 aa)). Positions 315 to 384 (MKRSTHSGPA…ARPGPVRLRP (70 aa)) are disordered. Over residues 357-376 (KRVENGQEPVTKYESRHEAR) the composition is skewed to basic and acidic residues. A Glycyl lysine isopeptide (Lys-Gly) (interchain with G-Cter in SUMO); alternate cross-link involves residue Lys368. A Glycyl lysine isopeptide (Lys-Gly) (interchain with G-Cter in SUMO1); alternate cross-link involves residue Lys368. Residue Lys368 forms a Glycyl lysine isopeptide (Lys-Gly) (interchain with G-Cter in SUMO2); alternate linkage. Phosphoserine is present on Ser431. The 69-residue stretch at 453–521 (NPVSGLLEYA…AVKAMAILLR (69 aa)) folds into the DRBM 1 domain. The disordered stretch occupies residues 524 to 561 (KAKDSGQPEELSNCPMEEDPEKPAESQPPSSSATSLFS). A compositionally biased stretch (polar residues) spans 550–561 (QPPSSSATSLFS). A phosphoserine mark is found at Ser564, Ser579, and Ser586. Residues 564-632 (SPVTTLLECM…AEEAMKALQE (69 aa)) form the DRBM 2 domain. The tract at residues 632 to 652 (EEAANSADDQSGGANTDSLDE) is disordered. A compositionally biased stretch (polar residues) spans 638-648 (ADDQSGGANTD). The tract at residues 662 to 671 (IGELVRYLNT) is N-terminal extension of DRBM 3 and constituent of a bi-partite nuclear localization signal. Residues 672–740 (NPVGGLLEYA…ADAALRVLIG (69 aa)) form the DRBM 3 domain. A C-terminal extension of DRBM 3 and constituent of a bi-partite nuclear localization signal region spans residues 741–747 (ESEKAEQ). Thr754 carries the post-translational modification Phosphothreonine. Phosphoserine is present on residues Ser760, Ser769, and Ser771. Lys821 participates in a covalent cross-link: Glycyl lysine isopeptide (Lys-Gly) (interchain with G-Cter in SUMO2). The A to I editase domain occupies 832–1167 (SLGTGNRCVK…ISKPQEEKNF (336 aa)). His856 is a Zn(2+) binding site. Residue Glu858 is the Proton donor of the active site. Zn(2+) contacts are provided by Cys912 and Cys982.

In terms of assembly, homodimer. Homodimerization is essential for its catalytic activity. Isoform 5 can form heterodimers with ADARB1/ADAR2. Isoform 1 interacts with ILF2/NF45 and ILF3/NF90. Binding to ILF3/NF90 up-regulates ILF3-mediated gene expression. Isoform 1 and isoform 5 (via DRBM 3 domain) interact with TNPO1. Isoform 5 (via DRBM domains) interacts with XPO5. Isoform 1 and isoform 5 can interact with EIF2AK2/PKR and UPF1. In terms of processing, sumoylation reduces RNA-editing activity. Detected in brain.

The protein localises to the cytoplasm. It localises to the nucleus. The enzyme catalyses adenosine in double-stranded RNA + H2O + H(+) = inosine in double-stranded RNA + NH4(+). In terms of biological role, catalyzes the hydrolytic deamination of adenosine to inosine in double-stranded RNA (dsRNA) referred to as A-to-I RNA editing. This may affect gene expression and function in a number of ways that include mRNA translation by changing codons and hence the amino acid sequence of proteins; pre-mRNA splicing by altering splice site recognition sequences; RNA stability by changing sequences involved in nuclease recognition; genetic stability in the case of RNA virus genomes by changing sequences during viral RNA replication; and RNA structure-dependent activities such as microRNA production or targeting or protein-RNA interactions. Can edit both viral and cellular RNAs and can edit RNAs at multiple sites (hyper-editing) or at specific sites (site-specific editing). Its cellular RNA substrates include: bladder cancer-associated protein (BLCAP), neurotransmitter receptors for glutamate (GRIA2) and serotonin (HTR2C) and GABA receptor (GABRA3). Site-specific RNA editing of transcripts encoding these proteins results in amino acid substitutions which consequently alters their functional activities. Exhibits low-level editing at the GRIA2 Q/R site, but edits efficiently at the R/G site and HOTSPOT1. Does not affect polyomavirus replication but provides protection against virus-induced cytopathic effects. Essential for embryonic development and cell survival and plays a critical role in the maintenance of hematopoietic stem cells. In Rattus norvegicus (Rat), this protein is Double-stranded RNA-specific adenosine deaminase (Adar).